A 107-amino-acid polypeptide reads, in one-letter code: Large ribosomal subunit protein uL24 (107 aa).

Belongs to the universal ribosomal protein uL24 family. Part of the 50S ribosomal subunit.

Functionally, one of two assembly initiator proteins, it binds directly to the 5'-end of the 23S rRNA, where it nucleates assembly of the 50S subunit. In terms of biological role, one of the proteins that surrounds the polypeptide exit tunnel on the outside of the subunit. In Thiobacillus denitrificans (strain ATCC 25259 / T1), this protein is Large ribosomal subunit protein uL24.